The chain runs to 223 residues: Chorismate dehydratase (223 aa).

It belongs to the MqnA/MqnD family. MqnA subfamily.

It catalyses the reaction chorismate = 3-[(1-carboxyvinyl)-oxy]benzoate + H2O. It functions in the pathway quinol/quinone metabolism; menaquinone biosynthesis. Its function is as follows. Catalyzes the dehydration of chorismate into 3-[(1-carboxyvinyl)oxy]benzoate, a step in the biosynthesis of menaquinone (MK, vitamin K2). In Campylobacter jejuni subsp. jejuni serotype O:23/36 (strain 81-176), this protein is Chorismate dehydratase.